A 449-amino-acid polypeptide reads, in one-letter code: MFS-type transporter 1 (449 aa).

The segment covering 1–37 (MTHSSSNEHEKEDDRRASDDMMDRDDQNAKEEQDVSK) has biased composition (basic and acidic residues). Residues 1–43 (MTHSSSNEHEKEDDRRASDDMMDRDDQNAKEEQDVSKDAPPVN) form a disordered region. Helical transmembrane passes span 61 to 81 (VAGGFCSLFCSFGWINCIGIF), 97 to 117 (TISWIASLELFILFAGGLVVG), 127 to 147 (YILLFGTFMHVFGLMMASLST), 152 to 172 (ILLSQGICSPIGISCLFTPAV), 185 to 205 (LANGIVAAGSSLGGVIFPIMF), and 212 to 232 (VGFPWAMRIGAFLILFLLIIA). N-linked (GlcNAc...) asparagine glycosylation is present at Asn233. 6 consecutive transmembrane segments (helical) span residues 262–282 (LLTTIAAMIFVLGLFLPINYI), 298–318 (YLIPILNAASLFGRTVPGFVA), 326–346 (VHTFMCFFSSVVAFALWLPAA), 349–369 (APIIVFAALYGFGSGAFVAIL), 390–410 (FGVLSLPALVSNPIGGAFVAH), and 420–440 (IWTGCITMLGAILFVVARISL).

Belongs to the major facilitator superfamily. Monocarboxylate porter (TC 2.A.1.13) family.

Its subcellular location is the cell membrane. It catalyses the reaction erythrostominone(in) = erythrostominone(out). It carries out the reaction deoxyerythrostominone(in) = deoxyerythrostominone(out). The catalysed reaction is epierythrostominol(in) = epierythrostominol(out). The enzyme catalyses deoxyerythrostominol(in) = deoxyerythrostominol(out). MFS-type transporter that mediates the secretion of the 4 major naphthoquinone derivatives produced, erythrostominone (NQ1), deoxyerythrostominone (NQ2), epierythrostominol (NQ4), and deoxyerythrostominol (NQ5), as well as of 3 newly identified naphthoquinone derivatives termed NQ7, NQ8 and NQ9. This is MFS-type transporter 1 from Ophiocordyceps sp. (strain BCC 1869) (Entomopathogenic fungus).